Reading from the N-terminus, the 397-residue chain is Protein ROH1D (397 aa).

A helical transmembrane segment spans residues 247-267 (LIVPVYTMTTVLLFVMWALVA).

The protein belongs to the ROH1 family. As to quaternary structure, interacts with EXO70C2. Mostly expressed in mature pollen.

The protein resides in the membrane. It is found in the cytoplasm. Its subcellular location is the cytosol. Its function is as follows. Involved in the regulation of plant growth, and modulates pollen development to ensure male fertility. May also affect the composition of the inner seed coat mucilage layer. This is Protein ROH1D from Arabidopsis thaliana (Mouse-ear cress).